The primary structure comprises 310 residues: Probable deoxyhypusine synthase (310 aa).

The active-site Nucleophile is Lys-284.

It belongs to the deoxyhypusine synthase family. NAD(+) serves as cofactor.

The enzyme catalyses [eIF5A protein]-L-lysine + spermidine = [eIF5A protein]-deoxyhypusine + propane-1,3-diamine. Its pathway is protein modification; eIF5A hypusination. Its function is as follows. Catalyzes the NAD-dependent oxidative cleavage of spermidine and the subsequent transfer of the butylamine moiety of spermidine to the epsilon-amino group of a specific lysine residue of the eIF-5A precursor protein to form the intermediate deoxyhypusine residue. This Thermoplasma volcanium (strain ATCC 51530 / DSM 4299 / JCM 9571 / NBRC 15438 / GSS1) protein is Probable deoxyhypusine synthase (dys).